A 137-amino-acid polypeptide reads, in one-letter code: GEL complex subunit OPTI (137 aa).

Residues 1 to 44 (MSGGRRKEEPPQPQLANGALKVSVWSKVLRSDAAWEDKDEFLDV) lie on the Cytoplasmic side of the membrane. A helical membrane pass occupies residues 45–65 (IYWFRQIIAVVLGVIWGVLPL). Arg66 is a topological domain (lumenal). A helical transmembrane segment spans residues 67–84 (GFLGIAGFCLINAGVLYL). The Cytoplasmic portion of the chain corresponds to 85–103 (YFSNYLQIDEEEYGGTWEL). A helical membrane pass occupies residues 104 to 127 (TKEGFMTSFALFMVCVADSFTTGH). At 128–137 (LDHLLHCHPL) the chain is on the lumenal side.

This sequence belongs to the EMC6 family. In terms of assembly, component of the GET- and EMC-like (GEL) complex, composed of RAB5IF/OPTI and TMCO1. The GEL complex is part of the multi-pass translocon (MPT) complex, composed of three subcomplexes, the GEL complex (composed of RAB5IF/OPTI and TMCO1), the BOS complex (composed of NCLN/Nicalin, NOMO and TMEM147) and the PAT complex (composed of WDR83OS/Asterix and CCDC47). The MPT complex associates with the SEC61 complex. Interacts with NDUFS3, NDUFA4, NDUFV1, NDUFA9 and NDUFS8 of the mitochondrial membrane respiratory chain NADH dehydrogenase (Complex I). Interacts with UQCRC2 of the ubiquinol-cytochrome c reductase complex (Complex III). Interacts with COX5A and COX7C of the cytochrome c oxidase complex (Complex IV). As to expression, expressed in embryonic stem cells and differentiated neuronal cells.

The protein localises to the endoplasmic reticulum membrane. It is found in the mitochondrion inner membrane. Component of the multi-pass translocon (MPT) complex that mediates insertion of multi-pass membrane proteins into the lipid bilayer of membranes. The MPT complex takes over after the SEC61 complex: following membrane insertion of the first few transmembrane segments of proteins by the SEC61 complex, the MPT complex occludes the lateral gate of the SEC61 complex to promote insertion of subsequent transmembrane regions. Within the MPT complex, the GEL subcomplex may mediate insertion of transmembrane regions into the membrane. In addition to its role in multi-pass membrane insertion, RAB5IF/OPTI also acts as an assembly factor for mitochondrial respiratory complexes. The sequence is that of GEL complex subunit OPTI from Homo sapiens (Human).